We begin with the raw amino-acid sequence, 517 residues long: Crotonobetaine/carnitine--CoA ligase (517 aa).

It belongs to the ATP-dependent AMP-binding enzyme family.

It catalyses the reaction 4-(trimethylamino)butanoate + ATP + CoA = 4-(trimethylamino)butanoyl-CoA + AMP + diphosphate. The catalysed reaction is crotonobetaine + ATP + CoA = crotonobetainyl-CoA + AMP + diphosphate. The enzyme catalyses (R)-carnitine + ATP + CoA = (R)-carnitinyl-CoA + AMP + diphosphate. Its pathway is amine and polyamine metabolism; carnitine metabolism. Its function is as follows. Catalyzes the transfer of CoA to carnitine, generating the initial carnitinyl-CoA needed for the CaiB reaction cycle. Also has activity toward crotonobetaine and gamma-butyrobetaine. This is Crotonobetaine/carnitine--CoA ligase from Escherichia coli (strain SE11).